Reading from the N-terminus, the 517-residue chain is Acetylcholine receptor subunit gamma (517 aa).

The N-terminal stretch at 1 to 22 (MHGGQGPLLLLLLLAVCLGAQG) is a signal peptide. Residues 23–240 (RNQEERLLAD…VVFYLLIQRK (218 aa)) are Extracellular-facing. N-linked (GlcNAc...) asparagine glycans are attached at residues Asn-52 and Asn-163. Cys-150 and Cys-164 are oxidised to a cystine. 3 helical membrane passes run 241-265 (PLFY…IHFL), 275-293 (TVAI…LVAK), and 309-330 (LTFL…LNVS). The Cytoplasmic segment spans residues 331-474 (LRSPHTHSMA…WFLVGRVLDR (144 aa)). Residues 475 to 495 (VCFLAMLSLFICGTAGIFLMA) form a helical membrane-spanning segment.

The protein belongs to the ligand-gated ion channel (TC 1.A.9) family. Acetylcholine receptor (TC 1.A.9.1) subfamily. Gamma/CHRNG sub-subfamily. Pentamer of two alpha chains, and one each of the beta, delta, and gamma (in immature muscle) or epsilon (in mature muscle) chains.

Its subcellular location is the postsynaptic cell membrane. The protein localises to the cell membrane. The catalysed reaction is K(+)(in) = K(+)(out). It carries out the reaction Na(+)(in) = Na(+)(out). Functionally, after binding acetylcholine, the AChR responds by an extensive change in conformation that affects all subunits and leads to opening of an ion-conducting channel across the plasma membrane. The chain is Acetylcholine receptor subunit gamma from Homo sapiens (Human).